Consider the following 176-residue polypeptide: Disulfide bond formation protein B (176 aa).

Topologically, residues 1 to 11 (MLQLTTYRNLQ) are cytoplasmic. A helical transmembrane segment spans residues 12-28 (VFLVIMTAIGMSFALFF). Residues 29–46 (LQRYMGFSPCPLCIFQRI) lie on the Periplasmic side of the membrane. Cys-38 and Cys-41 are oxidised to a cystine. A helical transmembrane segment spans residues 47–63 (GLMIMGGFALIAALFHP). At 64–70 (KSMVIRL) the chain is on the cytoplasmic side. The helical transmembrane segment at 71–88 (LLWLGSLAGIGWAAIVAG) threads the bilayer. Topologically, residues 89 to 145 (RHVWLQHLPADQVPSCGPGLDYWLDTLPMQQVLKEVFAGSGECASIEWTFLGLSIPE) are periplasmic. An intrachain disulfide couples Cys-104 to Cys-131. A helical transmembrane segment spans residues 146–164 (QSLILFSILILTHLLILWR). Topologically, residues 165–176 (IVRPSTPKPLAR) are cytoplasmic.

This sequence belongs to the DsbB family.

It localises to the cell inner membrane. Its function is as follows. Required for disulfide bond formation in some periplasmic proteins. Acts by oxidizing the DsbA protein. This is Disulfide bond formation protein B from Psychrobacter arcticus (strain DSM 17307 / VKM B-2377 / 273-4).